A 283-amino-acid polypeptide reads, in one-letter code: Lectin subunit alpha (283 aa).

An N-terminal signal peptide occupies residues 1–23 (MSLTMKNVEGFVIFLVIFTSTAA). The C-type lectin domain maps to 51-159 (HECARHDQQL…NVKMGYICEP (109 aa)). Cystine bridges form between Cys53–Cys157 and Cys132–Cys149.

Functionally, role in the defense system of the organism against microorganisms. This lectin binds galactose. The chain is Lectin subunit alpha from Sarcophaga peregrina (Flesh fly).